The sequence spans 209 residues: Large ribosomal subunit protein uL3 (209 aa).

Residues 127-164 (NFSGGQRTHGQSDRLRAPGSVGGASDPSRTFKGTKMGG) form a disordered region.

It belongs to the universal ribosomal protein uL3 family. In terms of assembly, part of the 50S ribosomal subunit. Forms a cluster with proteins L14 and L19.

In terms of biological role, one of the primary rRNA binding proteins, it binds directly near the 3'-end of the 23S rRNA, where it nucleates assembly of the 50S subunit. The chain is Large ribosomal subunit protein uL3 from Chlorobium phaeobacteroides (strain BS1).